We begin with the raw amino-acid sequence, 343 residues long: Major outer membrane protein (343 aa).

The N-terminal stretch at Met1–Ala20 is a signal peptide.

As to quaternary structure, disulfide bond interactions within and between MOMP molecules and other components form high molecular-weight oligomers.

It is found in the cell outer membrane. In terms of biological role, structural rigidity of the outer membrane of elementary bodies and porin forming, permitting diffusion of solutes through the intracellular reticulate body membrane. The sequence is that of Major outer membrane protein (ompH) from Pasteurella multocida.